The following is a 134-amino-acid chain: Profilin-4 (134 aa).

Cys13 and Cys118 are oxidised to a cystine. The Involved in PIP2 interaction motif lies at 84 to 100; that stretch reads AVIRGKKGSGGITIKKT. At Thr114 the chain carries Phosphothreonine.

This sequence belongs to the profilin family. In terms of assembly, occurs in many kinds of cells as a complex with monomeric actin in a 1:1 ratio. Phosphorylated by MAP kinases.

The protein localises to the cytoplasm. Its subcellular location is the cytoskeleton. In terms of biological role, binds to actin and affects the structure of the cytoskeleton. At high concentrations, profilin prevents the polymerization of actin, whereas it enhances it at low concentrations. The polypeptide is Profilin-4 (Olea europaea (Common olive)).